We begin with the raw amino-acid sequence, 345 residues long: uncharacterized protein (345 aa).

2 helical membrane passes run 23–43 and 56–76; these read VVGF…YSYV and FLIA…FVAL. Residues 326–345 are disordered; that stretch reads VTEPTTNSKRKPVKAKKAKK. Basic residues predominate over residues 333–345; that stretch reads SKRKPVKAKKAKK.

It localises to the cell membrane. This is an uncharacterized protein from Mycoplasma pneumoniae (strain ATCC 29342 / M129 / Subtype 1) (Mycoplasmoides pneumoniae).